The following is a 61-amino-acid chain: UPF0434 protein MS0934 (61 aa).

It belongs to the UPF0434 family.

This Mannheimia succiniciproducens (strain KCTC 0769BP / MBEL55E) protein is UPF0434 protein MS0934.